The primary structure comprises 448 residues: Packaging protein 1 (448 aa).

The interval 1–76 (METKGRRSAA…SQPAKRGGLL (76 aa)) is disordered. Over residues 22 to 31 (PRKRPTRRAP) the composition is skewed to basic residues. Positions 56–67 (RPSSDSLLQEPS) are enriched in polar residues. 171 to 178 (GPTGCGKS) contacts ATP. The segment at 440-448 (RAYRARKIK) is DNA-binding.

It belongs to the adenoviridae packaging protein 1 family. In terms of assembly, homodimer. Part of a genome packaging complex composed of packaging proteins 1, 2 and 3; this complex specifically binds to the packaging sequence on the left end of viral genomic DNA and performs packaging of the viral genome. Interacts with protein 33K.

The protein localises to the virion. The protein resides in the host nucleus. Its subcellular location is the host nucleoplasm. It localises to the host nucleolus. Its function is as follows. Component of the packaging machinery which encapsidates the viral DNA into preformed capsids and transcriptional activator of the viral major late promoter (MLP). Binds, along with packaging proteins 2 and 3, to the specific packaging sequence on the left end of viral genomic DNA and displays ATPase activity thereby providing the power stroke of the packaging machinery. The activity of packaging protein IVa2 is stimulated by protein 33K which acts as a terminase. May be the protein that pumps DNA into the capsid powered by ATP hydrolysis. Specifically binds to the 5'-CG-3' nucleotides of the repeats making up the packaging sequence. Component of the DEF-A and DEF-B transcription factors that bind downstream elements of the major late promoter (MLP), and stimulate transcription from the MLP after initiation of viral DNA replication. DEF-A is a heterodimer packaging proteins 1 and 2 and DEF-B is a homodimer of packaging protein 1. This Human adenovirus B serotype 7 (HAdV-7) protein is Packaging protein 1.